The following is a 369-amino-acid chain: tRNA pseudouridine synthase D (369 aa).

The active-site Nucleophile is Asp80. The region spanning 156–318 is the TRUD domain; that stretch reads GIPNWFGEQR…LKQERRALRL (163 aa).

Belongs to the pseudouridine synthase TruD family.

The catalysed reaction is uridine(13) in tRNA = pseudouridine(13) in tRNA. In terms of biological role, responsible for synthesis of pseudouridine from uracil-13 in transfer RNAs. The chain is tRNA pseudouridine synthase D from Xanthomonas euvesicatoria pv. vesicatoria (strain 85-10) (Xanthomonas campestris pv. vesicatoria).